We begin with the raw amino-acid sequence, 215 residues long: Probable phosphoglycerate mutase GpmB (215 aa).

Substrate contacts are provided by residues 8-15, 21-22, arginine 58, 82-85, 104-105, and 151-152; these read RHGETQWN, QG, ELDM, RR, and GI. The Tele-phosphohistidine intermediate role is filled by histidine 9. Glutamate 82 (proton donor/acceptor) is an active-site residue.

Belongs to the phosphoglycerate mutase family. GpmB subfamily.

The catalysed reaction is (2R)-2-phosphoglycerate = (2R)-3-phosphoglycerate. The protein operates within carbohydrate degradation; glycolysis; pyruvate from D-glyceraldehyde 3-phosphate: step 3/5. The chain is Probable phosphoglycerate mutase GpmB from Enterobacter sp. (strain 638).